The primary structure comprises 196 residues: NADH-quinone oxidoreductase subunit C (196 aa).

Belongs to the complex I 30 kDa subunit family. In terms of assembly, NDH-1 is composed of 14 different subunits. Subunits NuoB, C, D, E, F, and G constitute the peripheral sector of the complex.

It is found in the cell inner membrane. The enzyme catalyses a quinone + NADH + 5 H(+)(in) = a quinol + NAD(+) + 4 H(+)(out). NDH-1 shuttles electrons from NADH, via FMN and iron-sulfur (Fe-S) centers, to quinones in the respiratory chain. The immediate electron acceptor for the enzyme in this species is believed to be ubiquinone. Couples the redox reaction to proton translocation (for every two electrons transferred, four hydrogen ions are translocated across the cytoplasmic membrane), and thus conserves the redox energy in a proton gradient. This chain is NADH-quinone oxidoreductase subunit C, found in Rickettsia bellii (strain RML369-C).